Reading from the N-terminus, the 1385-residue chain is Contactin-associated protein 1 (1385 aa).

Residues 1-20 (MMSLRLFSILLATVVSGAWG) form the signal peptide. At 21-1284 (WGYYGCNEEL…PYYHDDGWIA (1264 aa)) the chain is on the extracellular side. One can recognise an F5/8 type C domain in the interval 26–169 (CNEELVGPLY…IGLRLGIYGC (144 aa)). A disulfide bond links Cys-26 and Cys-169. Asn-121, Asn-129, and Asn-277 each carry an N-linked (GlcNAc...) asparagine glycan. Laminin G-like domains lie at 204–356 (FKTE…AFRC) and 390–539 (FRTW…FDTC). An intrachain disulfide couples Cys-324 to Cys-356. Asn-421, Asn-500, and Asn-519 each carry an N-linked (GlcNAc...) asparagine glycan. 4 disulfide bridges follow: Cys-507/Cys-539, Cys-545/Cys-556, Cys-550/Cys-565, and Cys-567/Cys-577. Positions 545–577 (CSPNMCEHDGRCYQSWDDFICYCELTGYKGVTC) constitute an EGF-like 1 domain. One can recognise a Fibrinogen C-terminal domain in the interval 577–796 (CHEPLYKESC…NTISFHTGAA (220 aa)). 9 N-linked (GlcNAc...) asparagine glycosylation sites follow: Asn-598, Asn-654, Asn-665, Asn-764, Asn-805, Asn-844, Asn-861, Asn-949, and Asn-957. One can recognise a Laminin G-like 3 domain in the interval 814 to 958 (FRTSAPSGVF…NASEGTFPNC (145 aa)). Cystine bridges form between Cys-931–Cys-958, Cys-962–Cys-975, Cys-969–Cys-984, and Cys-986–Cys-996. The 35-residue stretch at 962–996 (CTHPRFPCFHGGRCVERYSYYTCDCDLTAFDGPYC) folds into the EGF-like 2 domain. Asn-1079 and Asn-1148 each carry an N-linked (GlcNAc...) asparagine glycan. Residues 1089–1251 (FSTNSAPAVL…VQGELSESNC (163 aa)) form the Laminin G-like 4 domain. A disulfide bridge connects residues Cys-1210 and Cys-1251. Residues 1285–1305 (ILLGFLVAFLLLGLVGMLVLF) form a helical membrane-spanning segment. The Cytoplasmic portion of the chain corresponds to 1306 to 1385 (YLQNHRYKGS…PQILEESRSE (80 aa)). The disordered stretch occupies residues 1317–1385 (HTNEPKATHD…PQILEESRSE (69 aa)). Basic and acidic residues predominate over residues 1319 to 1329 (NEPKATHDSHP). Over residues 1334 to 1367 (PLPPSGPAQAPAPTPAPTQLPTPAPAPAPAPASG) the composition is skewed to pro residues. The SH3-binding signature appears at 1334 to 1370 (PLPPSGPAQAPAPTPAPTQLPTPAPAPAPAPASGPGP). A Phosphoserine modification is found at Ser-1384.

The protein belongs to the neurexin family. As to quaternary structure, interacts with CNTN1/contactin in cis form. As to expression, expressed in brain. In myelinated nerve fibers predominantly found in paranodal axoglial junctions. In the internodal region of myelinated axons in the CNS and the PNS also found as a thin line apposing the inner mesaxon of the myelin sheath. In PNS neurons this line forms a circumferential ring that apposes the innermost aspect of Schmidt-Lanterman incisures.

It localises to the membrane. It is found in the cell junction. The protein resides in the paranodal septate junction. Functionally, required, with CNTNAP2, for radial and longitudinal organization of myelinated axons. Plays a role in the formation of functional distinct domains critical for saltatory conduction of nerve impulses in myelinated nerve fibers. Demarcates the paranodal region of the axo-glial junction. In association with contactin involved in the signaling between axons and myelinating glial cells. The polypeptide is Contactin-associated protein 1 (Cntnap1) (Mus musculus (Mouse)).